The sequence spans 450 residues: UDP-N-acetylmuramoylalanine--D-glutamate ligase (450 aa).

Residue 119-125 (GSNGKTT) participates in ATP binding.

This sequence belongs to the MurCDEF family.

The protein resides in the cytoplasm. It carries out the reaction UDP-N-acetyl-alpha-D-muramoyl-L-alanine + D-glutamate + ATP = UDP-N-acetyl-alpha-D-muramoyl-L-alanyl-D-glutamate + ADP + phosphate + H(+). Its pathway is cell wall biogenesis; peptidoglycan biosynthesis. Functionally, cell wall formation. Catalyzes the addition of glutamate to the nucleotide precursor UDP-N-acetylmuramoyl-L-alanine (UMA). This is UDP-N-acetylmuramoylalanine--D-glutamate ligase from Streptococcus thermophilus (strain CNRZ 1066).